A 1147-amino-acid polypeptide reads, in one-letter code: GPI inositol-deacylase (1147 aa).

The tract at residues 1-94 (MRRHSSGSSE…RTSPSSPLGL (94 aa)) is disordered. An N-linked (GlcNAc...) asparagine glycan is attached at Asn-23. Positions 28 to 49 (SAKDSRSSAHPTTKLDHNRNAD) are enriched in basic and acidic residues. A compositionally biased stretch (low complexity) spans 50–63 (RPPSFSISRRSSSI). Asn-74 carries N-linked (GlcNAc...) asparagine glycosylation. A helical transmembrane segment spans residues 127–147 (AITFSALVAAIVGIGFLVAVL). Ser-310 is a catalytic residue. Transmembrane regions (helical) follow at residues 795 to 815 (LYMR…ALVL) and 843 to 863 (IPLM…MAPA). Asn-865 and Asn-873 each carry an N-linked (GlcNAc...) asparagine glycan. 3 consecutive transmembrane segments (helical) span residues 893–913 (PLFL…CTVF), 918–938 (LTLT…PGWI), and 965–985 (VLLL…VACL). N-linked (GlcNAc...) asparagine glycosylation occurs at Asn-1011. 3 helical membrane passes run 1015 to 1035 (SIFI…VVWV), 1052 to 1072 (VLSV…KMIP), and 1084 to 1104 (LLLF…AYTL).

Belongs to the GPI inositol-deacylase family.

The protein localises to the endoplasmic reticulum membrane. Involved in inositol deacylation of GPI-anchored proteins which plays important roles in the quality control and ER-associated degradation of GPI-anchored proteins. The polypeptide is GPI inositol-deacylase (BST1) (Chaetomium globosum (strain ATCC 6205 / CBS 148.51 / DSM 1962 / NBRC 6347 / NRRL 1970) (Soil fungus)).